The sequence spans 258 residues: Phosphate import ATP-binding protein PstB (258 aa).

Residues 12–253 form the ABC transporter domain; that stretch reads IEVKNLNFYY…PARKETEDYI (242 aa). Residue 44–51 coordinates ATP; that stretch reads GPSGCGKS.

It belongs to the ABC transporter superfamily. Phosphate importer (TC 3.A.1.7) family. In terms of assembly, the complex is composed of two ATP-binding proteins (PstB), two transmembrane proteins (PstC and PstA) and a solute-binding protein (PstS).

It is found in the cell inner membrane. It carries out the reaction phosphate(out) + ATP + H2O = ADP + 2 phosphate(in) + H(+). Its function is as follows. Part of the ABC transporter complex PstSACB involved in phosphate import. Responsible for energy coupling to the transport system. The protein is Phosphate import ATP-binding protein PstB of Bordetella avium (strain 197N).